Here is a 255-residue protein sequence, read N- to C-terminus: Type III pantothenate kinase (255 aa).

Aspartate 6–valine 13 contacts ATP. Residue glycine 107–cysteine 110 participates in substrate binding. Aspartate 109 serves as the catalytic Proton acceptor. Residue aspartate 129 coordinates K(+). Threonine 132 serves as a coordination point for ATP. A substrate-binding site is contributed by threonine 184.

It belongs to the type III pantothenate kinase family. As to quaternary structure, homodimer. NH4(+) is required as a cofactor. It depends on K(+) as a cofactor.

It is found in the cytoplasm. It catalyses the reaction (R)-pantothenate + ATP = (R)-4'-phosphopantothenate + ADP + H(+). It functions in the pathway cofactor biosynthesis; coenzyme A biosynthesis; CoA from (R)-pantothenate: step 1/5. Functionally, catalyzes the phosphorylation of pantothenate (Pan), the first step in CoA biosynthesis. This is Type III pantothenate kinase from Bifidobacterium longum subsp. infantis (strain ATCC 15697 / DSM 20088 / JCM 1222 / NCTC 11817 / S12).